The chain runs to 492 residues: Glutamyl-tRNA(Gln) amidotransferase subunit A (492 aa).

Catalysis depends on charge relay system residues Lys78 and Ser158. Ser182 (acyl-ester intermediate) is an active-site residue.

The protein belongs to the amidase family. GatA subfamily. As to quaternary structure, heterotrimer of A, B and C subunits.

It carries out the reaction L-glutamyl-tRNA(Gln) + L-glutamine + ATP + H2O = L-glutaminyl-tRNA(Gln) + L-glutamate + ADP + phosphate + H(+). In terms of biological role, allows the formation of correctly charged Gln-tRNA(Gln) through the transamidation of misacylated Glu-tRNA(Gln) in organisms which lack glutaminyl-tRNA synthetase. The reaction takes place in the presence of glutamine and ATP through an activated gamma-phospho-Glu-tRNA(Gln). This chain is Glutamyl-tRNA(Gln) amidotransferase subunit A, found in Rhodopseudomonas palustris (strain BisB5).